The following is a 412-amino-acid chain: Citrate synthase (412 aa).

Active-site residues include His305 and Asp364.

It belongs to the citrate synthase family.

It catalyses the reaction oxaloacetate + acetyl-CoA + H2O = citrate + CoA + H(+). It participates in carbohydrate metabolism; tricarboxylic acid cycle; isocitrate from oxaloacetate: step 1/2. The chain is Citrate synthase (gltA) from Rickettsia bellii.